We begin with the raw amino-acid sequence, 204 residues long: Sperm acrosome developmental regulator (204 aa).

Serine 65 carries the phosphoserine modification. Positions 172–184 (RRQERRRRHHLRA) are enriched in basic residues. Residues 172 to 204 (RRQERRRRHHLRAHMGPQPDPAQGLKQDARSPL) are disordered.

The protein resides in the cytoplasmic vesicle. It is found in the secretory vesicle. Its subcellular location is the acrosome. In terms of biological role, may play an important role in acrosome formation and nucleus shaping during spermiogenesis. The protein is Sperm acrosome developmental regulator (SPACDR) of Bos taurus (Bovine).